The chain runs to 289 residues: Leucine--tRNA ligase subunit beta (289 aa).

The 'KMSKS' region signature appears at 45–49 (KMSKS). An ATP-binding site is contributed by Lys48.

The protein belongs to the class-I aminoacyl-tRNA synthetase family. In terms of assembly, seems to consist of an alpha chain and a beta chain.

The protein localises to the cytoplasm. It carries out the reaction tRNA(Leu) + L-leucine + ATP = L-leucyl-tRNA(Leu) + AMP + diphosphate. The sequence is that of Leucine--tRNA ligase subunit beta (leuS') from Aquifex aeolicus (strain VF5).